The following is a 346-amino-acid chain: MVSSNFYKNLGPRKLTAIIDFLHDIIAPPKIHEDIAIHDIKILQEASPNDISFLSNPKYSEFLKTTKAAACIVPKNFTGEANPNTVLLHAQNSYFAYSKLIDFFYAPIKSYPTKIMKSAIVADSATIGKNCYIGHNVVIEDDVIIGDNSIIEAGSFIGRGVNIGRNARIEQHVSINYAIIGDDVVILAGAKIGQDGFGFSTEKGVHHKIFHIGIVKIGNNVEIGANTTIDRGSLQDTIIKDLCRIDNLVQIGHGVKIGKGSIIVAQTGIAGSSTIGKYCALGGQVGIAGHLNIGDGAQVAAQGGVAQNIEAGKIVGGSPAIPIMDWHRQSIIMKQLLKTSNSKLKK.

His-253 functions as the Proton acceptor in the catalytic mechanism.

It belongs to the transferase hexapeptide repeat family. LpxD subfamily. Homotrimer.

It catalyses the reaction a UDP-3-O-[(3R)-3-hydroxyacyl]-alpha-D-glucosamine + a (3R)-hydroxyacyl-[ACP] = a UDP-2-N,3-O-bis[(3R)-3-hydroxyacyl]-alpha-D-glucosamine + holo-[ACP] + H(+). Its pathway is bacterial outer membrane biogenesis; LPS lipid A biosynthesis. In terms of biological role, catalyzes the N-acylation of UDP-3-O-acylglucosamine using 3-hydroxyacyl-ACP as the acyl donor. Is involved in the biosynthesis of lipid A, a phosphorylated glycolipid that anchors the lipopolysaccharide to the outer membrane of the cell. This is UDP-3-O-acylglucosamine N-acyltransferase from Rickettsia peacockii (strain Rustic).